Reading from the N-terminus, the 390-residue chain is ATP phosphoribosyltransferase regulatory subunit (390 aa).

The protein belongs to the class-II aminoacyl-tRNA synthetase family. HisZ subfamily. As to quaternary structure, heteromultimer composed of HisG and HisZ subunits.

It is found in the cytoplasm. Its pathway is amino-acid biosynthesis; L-histidine biosynthesis; L-histidine from 5-phospho-alpha-D-ribose 1-diphosphate: step 1/9. In terms of biological role, required for the first step of histidine biosynthesis. May allow the feedback regulation of ATP phosphoribosyltransferase activity by histidine. This is ATP phosphoribosyltransferase regulatory subunit from Nitrosomonas eutropha (strain DSM 101675 / C91 / Nm57).